A 555-amino-acid chain; its full sequence is Meiotic mRNA stability protein kinase SSN3 (555 aa).

The Protein kinase domain occupies 75–463 (YEVIGYIAAG…AFNALEHKYF (389 aa)). 81–89 (IAAGTYGKV) is an ATP binding site. Residues 100–138 (TNSANGSSLNGTNAKIPQFDSTQPKSSSSMDMQANTNAL) are compositionally biased toward polar residues. The tract at residues 100–166 (TNSANGSSLN…REDVSPHYNS (67 aa)) is disordered. ATP is bound at residue Lys183. Asp286 functions as the Proton acceptor in the catalytic mechanism.

The protein belongs to the protein kinase superfamily. CMGC Ser/Thr protein kinase family. CDC2/CDKX subfamily. In terms of assembly, component of the SRB8-11 complex which consists of SRB8, SSN2/SRB9, SSN3/SRB10 and SSN8/SRB11. The SRB8-11 complex associates with the Mediator complex. The SSN3/SRB10 and SSN8/SRB11 kinase-cyclin pair also associate with the RNA polymerase II holoenzyme. Interacts with TUP1.

The protein resides in the nucleus. The enzyme catalyses L-seryl-[protein] + ATP = O-phospho-L-seryl-[protein] + ADP + H(+). It catalyses the reaction L-threonyl-[protein] + ATP = O-phospho-L-threonyl-[protein] + ADP + H(+). The catalysed reaction is [DNA-directed RNA polymerase] + ATP = phospho-[DNA-directed RNA polymerase] + ADP + H(+). In terms of biological role, component of the SRB8-11 complex. The SRB8-11 complex is a regulatory module of the Mediator complex which is itself involved in regulation of basal and activated RNA polymerase II-dependent transcription. The SRB8-11 complex may be involved in the transcriptional repression of a subset of genes regulated by Mediator. It may inhibit the association of the Mediator complex with RNA polymerase II to form the holoenzyme complex. The SRB8-11 complex phosphorylates the C-terminal domain (CTD) of the largest subunit of RNA polymerase II RPB1 at serines 2 and 5. The SSN3/SRB10 and SSN8/SRB11 kinase-cyclin pair may also positively and negatively regulate numerous transcriptional activators in response to changes in nutritional and physiological conditions. Phosphorylates GCN4, promoting its ubiquitin-mediated degradation, and MSN2, promoting its nuclear exclusion. Phosphorylates STE12, thereby promoting its degradation and inhibition of filamentous growth. Phosphorylates GAL4, and this phosphorylation is required for efficient galactose-inducible transcription. Also phosphorylates BDF1 and the TAF2 subunit of the TFIID complex. This is Meiotic mRNA stability protein kinase SSN3 (SSN3) from Saccharomyces cerevisiae (strain ATCC 204508 / S288c) (Baker's yeast).